A 571-amino-acid polypeptide reads, in one-letter code: Pectinesterase/pectinesterase inhibitor (571 aa).

Residues 27-178 (NSHQKAVESL…KILSSNAIDI (152 aa)) are pectinesterase inhibitor. A disordered region spans residues 233–254 (AQAGRPGAPADEGIGEGGGGGG). Positions 259–558 (THVVAKDGSG…TVANWLTPAN (300 aa)) are pectinesterase. Residues Thr336 and Gln366 each contribute to the substrate site. Asp389 serves as the catalytic Proton donor; for pectinesterase activity. Asp410 functions as the Nucleophile; for pectinesterase activity in the catalytic mechanism. Substrate-binding residues include Arg479 and Trp481.

It in the N-terminal section; belongs to the PMEI family. The protein in the C-terminal section; belongs to the pectinesterase family.

The protein localises to the secreted. Its subcellular location is the cell wall. The enzyme catalyses [(1-&gt;4)-alpha-D-galacturonosyl methyl ester](n) + n H2O = [(1-&gt;4)-alpha-D-galacturonosyl](n) + n methanol + n H(+). It functions in the pathway glycan metabolism; pectin degradation; 2-dehydro-3-deoxy-D-gluconate from pectin: step 1/5. Its function is as follows. Acts in the modification of cell walls via demethylesterification of cell wall pectin. The sequence is that of Pectinesterase/pectinesterase inhibitor from Brassica campestris (Field mustard).